The primary structure comprises 170 residues: Shikimate kinase (170 aa).

11–16 (LSGKST) serves as a coordination point for ATP. Ser-15 provides a ligand contact to Mg(2+). Substrate contacts are provided by Asp-33, Arg-57, and Gly-79. ATP is bound at residue Arg-119. Arg-137 lines the substrate pocket.

This sequence belongs to the shikimate kinase family. As to quaternary structure, monomer. It depends on Mg(2+) as a cofactor.

The protein localises to the cytoplasm. It carries out the reaction shikimate + ATP = 3-phosphoshikimate + ADP + H(+). Its pathway is metabolic intermediate biosynthesis; chorismate biosynthesis; chorismate from D-erythrose 4-phosphate and phosphoenolpyruvate: step 5/7. Functionally, catalyzes the specific phosphorylation of the 3-hydroxyl group of shikimic acid using ATP as a cosubstrate. In Clostridium botulinum (strain Okra / Type B1), this protein is Shikimate kinase.